The following is a 400-amino-acid chain: Tyrosine--tRNA ligase (400 aa).

The 'HIGH' region motif lies at 42-51; that stretch reads PTAPDLHLGH. The short motif at 226 to 230 is the 'KMSKS' region element; that stretch reads KMSKS. ATP is bound at residue lysine 229. Residues 339-399 form the S4 RNA-binding domain; that stretch reads FSISYILRRA…GKKKIAQIFV (61 aa).

It belongs to the class-I aminoacyl-tRNA synthetase family. TyrS type 2 subfamily. Homodimer.

The protein localises to the cytoplasm. The enzyme catalyses tRNA(Tyr) + L-tyrosine + ATP = L-tyrosyl-tRNA(Tyr) + AMP + diphosphate + H(+). Functionally, catalyzes the attachment of tyrosine to tRNA(Tyr) in a two-step reaction: tyrosine is first activated by ATP to form Tyr-AMP and then transferred to the acceptor end of tRNA(Tyr). The sequence is that of Tyrosine--tRNA ligase from Hahella chejuensis (strain KCTC 2396).